The chain runs to 244 residues: Serine acetyltransferase (244 aa).

Belongs to the transferase hexapeptide repeat family.

The protein resides in the cytoplasm. It carries out the reaction L-serine + acetyl-CoA = O-acetyl-L-serine + CoA. Its pathway is amino-acid biosynthesis; L-cysteine biosynthesis; L-cysteine from L-serine: step 1/2. This is Serine acetyltransferase (cysE) from Synechococcus elongatus (strain ATCC 33912 / PCC 7942 / FACHB-805) (Anacystis nidulans R2).